A 155-amino-acid polypeptide reads, in one-letter code: Rhombotin-1 (155 aa).

LIM zinc-binding domains lie at 21 to 83 (KGCA…LFGT) and 85 to 147 (GNCA…GQLN).

The protein localises to the nucleus. In terms of biological role, may be involved in gene regulation within neural lineage cells potentially by direct DNA binding or by binding to other transcription factors. The polypeptide is Rhombotin-1 (Danio rerio (Zebrafish)).